The primary structure comprises 276 residues: Chlorophyll a-b binding protein CP29.3, chloroplastic (276 aa).

The transit peptide at 1 to 29 (MATTTAAAASGIFGIRIQDPRPGTGRVQA) directs the protein to the chloroplast. Residues 1–53 (MATTTAAAASGIFGIRIQDPRPGTGRVQARFGFSFGKKKPAPPPKKSRQVQDD) form a disordered region. Positions 36 to 48 (GKKKPAPPPKKSR) are enriched in basic residues. Residue tryptophan 59 coordinates chlorophyll b. 3 residues coordinate chlorophyll a: phenylalanine 79, glutamate 141, and histidine 144. Residues 147 to 167 (WAMLGTLGAIAVEALTGIAWQ) form a helical membrane-spanning segment. Leucine 181 is a chlorophyll a binding site. Residues 185–205 (LPFSLTTLIWIEVLVVGYIEF) form a helical membrane-spanning segment. Positions 204 and 207 each coordinate chlorophyll b. Chlorophyll a is bound by residues glutamate 242, histidine 245, arginine 247, and glutamine 259. Residues 248–268 (LAMVAFLIFALQAAFTGKGPV) form a helical membrane-spanning segment.

It belongs to the light-harvesting chlorophyll a/b-binding (LHC) protein family. As to quaternary structure, the LHC complex consists of chlorophyll a-b binding proteins. Requires Binds at least 14 chlorophylls (8 Chl-a and 6 Chl-b) and carotenoids such as lutein and neoxanthin. as cofactor. Post-translationally, photoregulated by reversible phosphorylation of its threonine residues.

It is found in the plastid. It localises to the chloroplast thylakoid membrane. Its function is as follows. The light-harvesting complex (LHC) functions as a light receptor, it captures and delivers excitation energy to photosystems with which it is closely associated. The sequence is that of Chlorophyll a-b binding protein CP29.3, chloroplastic (LHCB4.3) from Arabidopsis thaliana (Mouse-ear cress).